The following is a 345-amino-acid chain: MNRYQEAGVDVNAGYELVKRIKENVKSTNRPGALGGIGAFGGLFDLGELKVKHPVLVSGTDGVGTKLLIAKAMDQHDTIGIDVVAMCVNDVLAQGAEPLYFLDYIATGHNDPAKMADIVAGVAEGCRQAGAALIGGETAEMPDMYDQDEYDLAGTVTGVVEKDDLLTSDQPQAGAILLGLASSGIHSNGFSLVRQILFKDHQVDLAATPAKLGGQTVGQAVLAPTKIYVKPVLPLLKDHLVEGVAHITGGGLIENLPRMFGDDLQAQVDSSAWPSLPVFDYLKELGGLSDDDCWQTFNMGLGMILAVQPDLVDQVKSRLNQAGEACYQVGQLVNRPAGEEKIVIK.

The protein belongs to the AIR synthase family.

Its subcellular location is the cytoplasm. The catalysed reaction is 2-formamido-N(1)-(5-O-phospho-beta-D-ribosyl)acetamidine + ATP = 5-amino-1-(5-phospho-beta-D-ribosyl)imidazole + ADP + phosphate + H(+). The protein operates within purine metabolism; IMP biosynthesis via de novo pathway; 5-amino-1-(5-phospho-D-ribosyl)imidazole from N(2)-formyl-N(1)-(5-phospho-D-ribosyl)glycinamide: step 2/2. This Limosilactobacillus fermentum (strain NBRC 3956 / LMG 18251) (Lactobacillus fermentum) protein is Phosphoribosylformylglycinamidine cyclo-ligase.